A 149-amino-acid chain; its full sequence is UPF0178 protein Sama_3557 (149 aa).

This sequence belongs to the UPF0178 family.

The chain is UPF0178 protein Sama_3557 from Shewanella amazonensis (strain ATCC BAA-1098 / SB2B).